The following is a 1336-amino-acid chain: Lysine-specific demethylase 2B (1336 aa).

The disordered stretch occupies residues 1-25 (MAGPQMGGSAEDHPPRKRHAAEKQK). Basic residues predominate over residues 15–25 (PRKRHAAEKQK). Phosphoserine is present on serine 57. A JmjC domain is found at 178 to 346 (FSHTKLEHLV…MQLRIYEIED (169 aa)). Substrate is bound at residue threonine 239. Residues histidine 242 and aspartate 244 each coordinate Fe cation. Residue lysine 259 coordinates substrate. Histidine 314 contacts Fe cation. Over residues 410–430 (MEEEACDQQPQEEEEKDEEGE) the composition is skewed to acidic residues. Residues 410-465 (MEEEACDQQPQEEEEKDEEGEGRDRAPKPPTDGSTSPTSTPSEDQEALGKKPKAPA) form a disordered region. Residues 440–451 (TDGSTSPTSTPS) show a composition bias toward low complexity. Residues serine 474 and serine 477 each carry the phosphoserine modification. Residue threonine 493 is modified to Phosphothreonine. Phosphoserine is present on serine 497. The CXXC-type zinc finger occupies 606–652 (ARRRRTRCRKCEACLRTECGECHFCKDMKKFGGPGRMKQSCIMRQCI). 16 residues coordinate Zn(2+): cysteine 613, cysteine 616, cysteine 619, cysteine 624, cysteine 627, cysteine 630, cysteine 646, cysteine 651, cysteine 662, cysteine 665, cysteine 688, cysteine 691, histidine 696, cysteine 699, cysteine 719, and cysteine 722. Residues 659-725 (TAVCLVCGEA…CWECPKCNHA (67 aa)) form a PHD-type zinc finger. Disordered regions lie at residues 727–843 (KTGK…SLSP) and 855–1034 (QLKP…SPPK). The segment covering 749 to 799 (KEQKMNRDNKEGQEPAKRRSECEEAPRRRSDEHSKKVPPDGLLRRKSDDVH) has biased composition (basic and acidic residues). Over residues 819–843 (SSLQTSPGSSSHLSPRPPLGSSLSP) the composition is skewed to low complexity. Glycyl lysine isopeptide (Lys-Gly) (interchain with G-Cter in SUMO2) cross-links involve residues lysine 857 and lysine 890. The span at 902–911 (PKTRESDHSR) shows a compositional bias: basic and acidic residues. The span at 932–941 (KVKMRRKRRL) shows a compositional bias: basic residues. Basic and acidic residues predominate over residues 942-960 (PNKELSRELSKELNHEIQR). Positions 943–971 (NKELSRELSKELNHEIQRTENSLANENQQ) form a coiled coil. Serine 951 carries the phosphoserine modification. The segment covering 961-971 (TENSLANENQQ) has biased composition (polar residues). Residues serine 975, serine 979, serine 1018, and serine 1031 each carry the phosphoserine modification. Residues 1014 to 1024 (PSLRSPPRVIS) are compositionally biased toward low complexity. The F-box domain maps to 1059–1105 (DGAAHVMHREVWMAVFSYLSHQDLCVCMRVCRTWNRWCCDKRLWTRI). 7 LRR repeats span residues 1093–1120 (NRWC…MLSG), 1133–1154 (WTNI…LRDL), 1156–1182 (LSGC…DVQW), 1222–1247 (GLDI…HLSY), 1248–1277 (CNHV…NLSD), 1278–1302 (CNKV…DLRY), and 1303–1336 (CKQV…QKLS).

It belongs to the JHDM1 histone demethylase family. Interacts with SKP1, forming heterodimers. The heterodimeric KDM2B-SKP1 complex interacts with the PCGF1-BCORL1 heterodimeric complex to form a homotetrameric polycomb repression complex 1 (PRC1.1). Directly interacts with CUL1. The SKP1-KDM2B complex interacts with UBB. Requires Fe(2+) as cofactor.

It is found in the nucleus. The protein localises to the nucleolus. Its subcellular location is the chromosome. It carries out the reaction N(6),N(6)-dimethyl-L-lysyl(36)-[histone H3] + 2 2-oxoglutarate + 2 O2 = L-lysyl(36)-[histone H3] + 2 formaldehyde + 2 succinate + 2 CO2. With respect to regulation, histone demethylase activity is inhibited by fumarate. In terms of biological role, histone demethylase that demethylates 'Lys-4' and 'Lys-36' of histone H3, thereby playing a central role in histone code. Preferentially demethylates trimethylated H3 'Lys-4' and dimethylated H3 'Lys-36' residue while it has weak or no activity for mono- and tri-methylated H3 'Lys-36'. Preferentially binds the transcribed region of ribosomal RNA and represses the transcription of ribosomal RNA genes which inhibits cell growth and proliferation. May also serve as a substrate-recognition component of the SCF (SKP1-CUL1-F-box protein)-type E3 ubiquitin ligase complex. This is Lysine-specific demethylase 2B (KDM2B) from Homo sapiens (Human).